A 138-amino-acid chain; its full sequence is uncharacterized protein (138 aa).

This is an uncharacterized protein from Bacillus subtilis (strain 168).